The following is a 65-amino-acid chain: MPKIKTVRGAAKRFKKTGKGGFKHKHANLRHILTKKATKRKRHLRPKAMVSKGDLGLIIACLPYA.

Residues 1-22 are disordered; the sequence is MPKIKTVRGAAKRFKKTGKGGF. A compositionally biased stretch (basic residues) spans 10-22; it reads AAKRFKKTGKGGF.

Belongs to the bacterial ribosomal protein bL35 family.

The polypeptide is Large ribosomal subunit protein bL35 (Escherichia coli O127:H6 (strain E2348/69 / EPEC)).